The following is a 103-amino-acid chain: Muscarinic toxin BM14 (103 aa).

An N-terminal signal peptide occupies residues 1–21; it reads MKTLLLTLVVVTIICLDLGYT. Disulfide bonds link Cys-24/Cys-45, Cys-27/Cys-37, Cys-38/Cys-72, Cys-76/Cys-90, and Cys-91/Cys-96.

Belongs to the three-finger toxin family. Ancestral subfamily. Orphan group XVII sub-subfamily. Expressed by the venom gland.

The protein resides in the secreted. In terms of biological role, this toxin inhibits the binding of [3H]quinuclidinyl benzilate to the M2 muscarinic acetylcholine (mAchR) receptor subtype (CHRM2). The chain is Muscarinic toxin BM14 from Bungarus multicinctus (Many-banded krait).